The primary structure comprises 757 residues: Maltose phosphorylase (757 aa).

354–355 (WD) contributes to the substrate binding site. Glutamate 483 (proton donor) is an active-site residue. Residue 588–589 (KQ) participates in substrate binding.

The protein belongs to the glycosyl hydrolase 65 family.

It catalyses the reaction D-maltose + phosphate = beta-D-glucose 1-phosphate + D-glucose. Its pathway is glycan degradation; maltose degradation. Catalyzes the phosphorolysis of maltose, leading to the formation of glucose and glucose 1-P. This chain is Maltose phosphorylase (mdxK), found in Bacillus subtilis (strain 168).